Consider the following 283-residue polypeptide: Probable aquaporin NIP4-2 (283 aa).

An N-acetylmethionine modification is found at methionine 1. Residues 1 to 21 show a composition bias toward basic and acidic residues; sequence MTSHGEEIEDEQISRIEKGNC. The disordered stretch occupies residues 1–23; the sequence is MTSHGEEIEDEQISRIEKGNCKD. The next 2 helical transmembrane spans lie at 51 to 71 and 77 to 97; these read GTYF…LYGG and GICV…GHIS. Positions 102 to 104 match the NPA 1 motif; sequence NPA. Helical transmembrane passes span 120–140, 161–181, and 189–209; these read VPLY…TLRL, ALVA…GVAT, and LAGI…GPIS. Residues 214-216 carry the NPA 2 motif; it reads NPA. A helical transmembrane segment spans residues 231–251; the sequence is IWVYIVGPFVGIFAGGFVYNF. At serine 267 the chain carries Phosphoserine.

It belongs to the MIP/aquaporin (TC 1.A.8) family. NIP (TC 1.A.8.12) subfamily.

It is found in the membrane. Aquaporins facilitate the transport of water and small neutral solutes across cell membranes. The sequence is that of Probable aquaporin NIP4-2 (NIP4-2) from Arabidopsis thaliana (Mouse-ear cress).